We begin with the raw amino-acid sequence, 255 residues long: Enolase-phosphatase E1 (255 aa).

Asp22 and Glu24 together coordinate Mg(2+). Substrate contacts are provided by residues Ser136–Ser137 and Lys173. Asp199 serves as a coordination point for Mg(2+).

The protein belongs to the HAD-like hydrolase superfamily. MasA/MtnC family. Monomer. Mg(2+) is required as a cofactor.

The protein localises to the cytoplasm. It localises to the nucleus. The enzyme catalyses 5-methylsulfanyl-2,3-dioxopentyl phosphate + H2O = 1,2-dihydroxy-5-(methylsulfanyl)pent-1-en-3-one + phosphate. The protein operates within amino-acid biosynthesis; L-methionine biosynthesis via salvage pathway; L-methionine from S-methyl-5-thio-alpha-D-ribose 1-phosphate: step 3/6. It functions in the pathway amino-acid biosynthesis; L-methionine biosynthesis via salvage pathway; L-methionine from S-methyl-5-thio-alpha-D-ribose 1-phosphate: step 4/6. Its function is as follows. Bifunctional enzyme that catalyzes the enolization of 2,3-diketo-5-methylthiopentyl-1-phosphate (DK-MTP-1-P) into the intermediate 2-hydroxy-3-keto-5-methylthiopentenyl-1-phosphate (HK-MTPenyl-1-P), which is then dephosphorylated to form the acireductone 1,2-dihydroxy-3-keto-5-methylthiopentene (DHK-MTPene). In Verticillium alfalfae (strain VaMs.102 / ATCC MYA-4576 / FGSC 10136) (Verticillium wilt of alfalfa), this protein is Enolase-phosphatase E1.